The sequence spans 282 residues: Undecaprenyl-diphosphatase (282 aa).

A run of 7 helical transmembrane segments spans residues 40-60 (GAAF…IYFM), 89-109 (WMIA…KDDI), 113-133 (LRSL…LSIA), 150-170 (ISEI…MALI), 196-216 (FSFL…LYKT), 230-250 (IAVA…FLLT), and 258-278 (GIFI…IGTG).

This sequence belongs to the UppP family.

The protein localises to the cell inner membrane. It catalyses the reaction di-trans,octa-cis-undecaprenyl diphosphate + H2O = di-trans,octa-cis-undecaprenyl phosphate + phosphate + H(+). In terms of biological role, catalyzes the dephosphorylation of undecaprenyl diphosphate (UPP). Confers resistance to bacitracin. The protein is Undecaprenyl-diphosphatase of Chlorobaculum parvum (strain DSM 263 / NCIMB 8327) (Chlorobium vibrioforme subsp. thiosulfatophilum).